Reading from the N-terminus, the 259-residue chain is Pyridoxine 5'-phosphate synthase (259 aa).

3-amino-2-oxopropyl phosphate is bound at residue asparagine 6. A 1-deoxy-D-xylulose 5-phosphate-binding site is contributed by 8 to 9 (DH). Residue arginine 17 coordinates 3-amino-2-oxopropyl phosphate. Histidine 42 (proton acceptor) is an active-site residue. 2 residues coordinate 1-deoxy-D-xylulose 5-phosphate: arginine 44 and histidine 49. The active-site Proton acceptor is the glutamate 69. Threonine 99 is a binding site for 1-deoxy-D-xylulose 5-phosphate. Histidine 212 serves as the catalytic Proton donor. Residues glycine 213 and 234-235 (GH) each bind 3-amino-2-oxopropyl phosphate.

The protein belongs to the PNP synthase family. As to quaternary structure, homooctamer; tetramer of dimers.

The protein resides in the cytoplasm. The enzyme catalyses 3-amino-2-oxopropyl phosphate + 1-deoxy-D-xylulose 5-phosphate = pyridoxine 5'-phosphate + phosphate + 2 H2O + H(+). Its pathway is cofactor biosynthesis; pyridoxine 5'-phosphate biosynthesis; pyridoxine 5'-phosphate from D-erythrose 4-phosphate: step 5/5. Functionally, catalyzes the complicated ring closure reaction between the two acyclic compounds 1-deoxy-D-xylulose-5-phosphate (DXP) and 3-amino-2-oxopropyl phosphate (1-amino-acetone-3-phosphate or AAP) to form pyridoxine 5'-phosphate (PNP) and inorganic phosphate. The protein is Pyridoxine 5'-phosphate synthase of Nautilia profundicola (strain ATCC BAA-1463 / DSM 18972 / AmH).